The following is a 317-amino-acid chain: L-lactate dehydrogenase (317 aa).

NAD(+) contacts are provided by V16, D37, and Y69. Substrate is bound by residues Q86, R92, and 124–127; that span reads NPVD. NAD(+)-binding positions include 122–124 and S147; that span reads ASN. Residue 152–155 participates in substrate binding; the sequence is DSAR. H179 acts as the Proton acceptor in catalysis. Y223 is subject to Phosphotyrosine. Position 232 (T232) interacts with substrate.

Belongs to the LDH/MDH superfamily. LDH family. Homotetramer.

The protein localises to the cytoplasm. It carries out the reaction (S)-lactate + NAD(+) = pyruvate + NADH + H(+). Its pathway is fermentation; pyruvate fermentation to lactate; (S)-lactate from pyruvate: step 1/1. Catalyzes the conversion of lactate to pyruvate. The sequence is that of L-lactate dehydrogenase from Mycoplasma capricolum subsp. capricolum (strain California kid / ATCC 27343 / NCTC 10154).